We begin with the raw amino-acid sequence, 93 residues long: Putative aspartate aminotransferase (93 aa).

Belongs to the class-I pyridoxal-phosphate-dependent aminotransferase family. Homodimer. It depends on pyridoxal 5'-phosphate as a cofactor.

The protein resides in the cytoplasm. It carries out the reaction L-aspartate + 2-oxoglutarate = oxaloacetate + L-glutamate. This is Putative aspartate aminotransferase from Methylorubrum extorquens (Methylobacterium dichloromethanicum).